The sequence spans 196 residues: MAQDIVMVVGLGNPGSDYENTRHNAGALFVEALAREAGQTLRPEKKYHGLYARIQWQGLDLHLLNPSTFMNRSGTAIKALADFFKISPEQILVAHDELDLPPGTAKLKKGGGHGGHNGLRDTIAHLGTNDFQRLRLGIGHPGDSRKVTGFVLGRLGKQETEQLTAVFDEVMRVLPDAASGKLAAAMNRLHSFKPTP.

Position 18 (tyrosine 18) interacts with tRNA. Residue histidine 23 is the Proton acceptor of the active site. The tRNA site is built by phenylalanine 69, asparagine 71, and asparagine 117.

This sequence belongs to the PTH family. As to quaternary structure, monomer.

It localises to the cytoplasm. It catalyses the reaction an N-acyl-L-alpha-aminoacyl-tRNA + H2O = an N-acyl-L-amino acid + a tRNA + H(+). Functionally, hydrolyzes ribosome-free peptidyl-tRNAs (with 1 or more amino acids incorporated), which drop off the ribosome during protein synthesis, or as a result of ribosome stalling. Its function is as follows. Catalyzes the release of premature peptidyl moieties from peptidyl-tRNA molecules trapped in stalled 50S ribosomal subunits, and thus maintains levels of free tRNAs and 50S ribosomes. The chain is Peptidyl-tRNA hydrolase from Marinobacter nauticus (strain ATCC 700491 / DSM 11845 / VT8) (Marinobacter aquaeolei).